The primary structure comprises 610 residues: Elongation factor 4 (610 aa).

Residues 15-197 (KSIRNFSIIA…RIINDIPYPK (183 aa)) enclose the tr-type G domain. Residues 27–32 (DHGKST) and 144–147 (NKID) each bind GTP.

The protein belongs to the TRAFAC class translation factor GTPase superfamily. Classic translation factor GTPase family. LepA subfamily.

It is found in the cell membrane. The catalysed reaction is GTP + H2O = GDP + phosphate + H(+). Functionally, required for accurate and efficient protein synthesis under certain stress conditions. May act as a fidelity factor of the translation reaction, by catalyzing a one-codon backward translocation of tRNAs on improperly translocated ribosomes. Back-translocation proceeds from a post-translocation (POST) complex to a pre-translocation (PRE) complex, thus giving elongation factor G a second chance to translocate the tRNAs correctly. Binds to ribosomes in a GTP-dependent manner. The sequence is that of Elongation factor 4 from Buchnera aphidicola subsp. Acyrthosiphon pisum (strain 5A).